We begin with the raw amino-acid sequence, 118 residues long: Small ribosomal subunit protein uS13 (118 aa).

Residues 92–118 (RRGHPLRGQRTRTNARTRKGPRKAIRK) form a disordered region.

The protein belongs to the universal ribosomal protein uS13 family. As to quaternary structure, part of the 30S ribosomal subunit. Forms a loose heterodimer with protein S19. Forms two bridges to the 50S subunit in the 70S ribosome.

Functionally, located at the top of the head of the 30S subunit, it contacts several helices of the 16S rRNA. In the 70S ribosome it contacts the 23S rRNA (bridge B1a) and protein L5 of the 50S subunit (bridge B1b), connecting the 2 subunits; these bridges are implicated in subunit movement. Contacts the tRNAs in the A and P-sites. The sequence is that of Small ribosomal subunit protein uS13 from Xanthomonas campestris pv. campestris (strain ATCC 33913 / DSM 3586 / NCPPB 528 / LMG 568 / P 25).